The following is a 657-amino-acid chain: Hemocyanin (657 aa).

N-linked (GlcNAc...) asparagine glycosylation is present at N167. Positions 194, 198, 224, 344, 348, and 384 each coordinate Cu cation. Intrachain disulfides connect C483-C502 and C562-C609.

It belongs to the tyrosinase family. Hemocyanin subfamily. As to quaternary structure, it consists of at least four very similar subunits. In terms of tissue distribution, hemolymph.

The protein localises to the secreted. It localises to the extracellular space. In terms of biological role, hemocyanins are copper-containing oxygen carriers occurring freely dissolved in the hemolymph of many mollusks and arthropods. This Palinurus vulgaris (European spiny lobster) protein is Hemocyanin.